A 437-amino-acid polypeptide reads, in one-letter code: GTPase Obg (437 aa).

Residues 2–160 (SLFLDTARIE…KILLLELRVL (159 aa)) enclose the Obg domain. The OBG-type G domain occupies 161-338 (ADVGLVGFPS…LLARTSELLA (178 aa)). GTP contacts are provided by residues 167–174 (GFPSVGKS), 192–196 (FTTIT), 214–217 (DMPG), 284–287 (NKMD), and 319–321 (SGL). Positions 174 and 194 each coordinate Mg(2+). The OCT domain occupies 359 to 437 (GFEEEEKPFK…IQKFEFEFVD (79 aa)).

Belongs to the TRAFAC class OBG-HflX-like GTPase superfamily. OBG GTPase family. As to quaternary structure, monomer. Mg(2+) is required as a cofactor.

It is found in the cytoplasm. In terms of biological role, an essential GTPase which binds GTP, GDP and possibly (p)ppGpp with moderate affinity, with high nucleotide exchange rates and a fairly low GTP hydrolysis rate. Plays a role in control of the cell cycle, stress response, ribosome biogenesis and in those bacteria that undergo differentiation, in morphogenesis control. The chain is GTPase Obg from Lactococcus lactis subsp. lactis (strain IL1403) (Streptococcus lactis).